A 602-amino-acid chain; its full sequence is Proteasome-associated ATPase (602 aa).

Residues 13-89 (PDAAEVERLR…LREEVDRLGQ (77 aa)) adopt a coiled-coil conformation. Residue 289 to 294 (GCGKTL) participates in ATP binding. The docks into pockets in the proteasome alpha-ring stretch occupies residues 601-602 (YL).

The protein belongs to the AAA ATPase family. In terms of assembly, homohexamer. Assembles into a hexameric ring structure that caps the 20S proteasome core. Strongly interacts with the prokaryotic ubiquitin-like protein Pup through a hydrophobic interface; the interacting region of ARC lies in its N-terminal coiled-coil domain. There is one Pup binding site per ARC hexamer ring. Upon ATP-binding, the C-terminus of ARC interacts with the alpha-rings of the proteasome core, possibly by binding to the intersubunit pockets.

It functions in the pathway protein degradation; proteasomal Pup-dependent pathway. Its function is as follows. ATPase which is responsible for recognizing, binding, unfolding and translocation of pupylated proteins into the bacterial 20S proteasome core particle. May be essential for opening the gate of the 20S proteasome via an interaction with its C-terminus, thereby allowing substrate entry and access to the site of proteolysis. Thus, the C-termini of the proteasomal ATPase may function like a 'key in a lock' to induce gate opening and therefore regulate proteolysis. This is Proteasome-associated ATPase from Mycobacteroides abscessus (strain ATCC 19977 / DSM 44196 / CCUG 20993 / CIP 104536 / JCM 13569 / NCTC 13031 / TMC 1543 / L948) (Mycobacterium abscessus).